Here is a 100-residue protein sequence, read N- to C-terminus: Guanine nucleotide-binding protein subunit gamma 2 (100 aa).

Methionine 1 carries the N-acetylmethionine modification. Residues 19–55 are a coiled coil; that stretch reads TRGKHRIQAELKRLEQEARFLEEELEQLEKMDNASAS. Positions 21–100 constitute a G protein gamma domain; the sequence is GKHRIQAELK…EAKRCGCSIL (80 aa). The regulates lipidation and cell membrane subcellular localization stretch occupies residues 90–96; that stretch reads KEAKRCG. Residue cysteine 95 is the site of S-palmitoyl cysteine attachment. Cysteine 97 carries the post-translational modification Cysteine methyl ester. Cysteine 97 is lipidated: S-farnesyl cysteine. Residues 98–100 constitute a propeptide, removed in mature form; the sequence is SIL.

G proteins are composed of 3 units, alpha, beta and gamma. GPG1 interacts with the beta subunit GB1. The dimer GB1-GG2 interacts with NDL1, NDL2 and NDL3. Binds to NUDT7. Mostly expressed in roots (excluded from the stele), seedlings (especially at the hypocotyl/root junction), floral stems, floral buds, flowers and siliques, and, to a lower extent, in leaves (restricted to guard cells). Also present in hydathods.

The protein resides in the cell membrane. Its function is as follows. Guanine nucleotide-binding proteins (G proteins) are involved as a modulator or transducer in various transmembrane signaling systems. The beta and gamma chains are required for the GTPase activity, for replacement of GDP by GTP, and for G protein-effector interaction. Involved in the abscisic acid (ABA) and ethylene signaling pathways. Regulates basipetal transport of auxin (IAA) in roots and hypocotyls, and thus modulates root architecture (e.g. lateral root formation). The heterotrimeric G-protein controls defense responses to necrotrophic and vascular fungi probably by modulating cell wall-related genes expression; involved in resistance to Plectosphaerella cucumerina. The sequence is that of Guanine nucleotide-binding protein subunit gamma 2 (GG2) from Arabidopsis thaliana (Mouse-ear cress).